We begin with the raw amino-acid sequence, 805 residues long: Polycystin-2-like protein 1 (805 aa).

Residues 1–59 form a disordered region; sequence MNAVGSPEGQELQKLGSGAWDNPAYSGPPSPHGTLRVCTISSTGPLQPQPKKPEDEPQE. Residues 1 to 103 lie on the Cytoplasmic side of the membrane; it reads MNAVGSPEGQ…ELYIKTTLRE (103 aa). The S-palmitoyl cysteine moiety is linked to residue Cys-38. A helical membrane pass occupies residues 104–124; the sequence is LLVYIVFLVDICLLTYGMTSS. Residues 125–356 are Extracellular-facing; it reads SAYYYTKVMS…NWDFFIVGCE (232 aa). Residues Asn-177 and Asn-207 are each glycosylated (N-linked (GlcNAc...) asparagine). Cys-210 and Cys-223 are joined by a disulfide. N-linked (GlcNAc...) asparagine glycosylation is present at Asn-241. Residues 357-376 traverse the membrane as a helical segment; it reads VIFCVFIFYYVVEEILELHI. Ca(2+) contacts are provided by Glu-370 and Glu-373. The Cytoplasmic portion of the chain corresponds to 377–384; sequence HRLRYLSS. Residues 385–405 form a helical membrane-spanning segment; the sequence is IWNILDLVVILLSIVAVGFHI. Residues Asn-387 and Asp-390 each coordinate Ca(2+). Residues 406–433 lie on the Extracellular side of the membrane; sequence FRTLEVNRLMGKLLQQPNTYADFEFLAF. The helical transmembrane segment at 434-454 threads the bilayer; that stretch reads WQTQYNNMNAVNLFFAWIKIF. Residues 455 to 479 lie on the Cytoplasmic side of the membrane; it reads KYISFNKTMTQLSSTLARCAKDILG. Residues 480–499 form a helical membrane-spanning segment; the sequence is FAVMFFIVFFAYAQLGYLLF. Over 500 to 511 the chain is Extracellular; that stretch reads GTQVENFSTFIK. Residue Asn-505 is glycosylated (N-linked (GlcNAc...) asparagine). The pore-forming intramembrane region spans 512-526; sequence CIFTQFRIILGDFDY. Residues 527–536 lie on the Extracellular side of the membrane; it reads NAIDNANRIL. A helical membrane pass occupies residues 537–557; sequence GPAYFVTYVFFVFFVLLNMFL. Topologically, residues 558-805 are cytoplasmic; that stretch reads AIINDTYSEV…RGEIPTLQRS (248 aa). In terms of domain architecture, EF-hand spans 633 to 668; it reads HEITELTATFTKFDRDGNRILDEKEQEKMRQDLEEE. Coiled-coil stretches lie at residues 650-686 and 700-740; these read NRIL…IVSS and GWVS…MLER. Positions 704 to 763 are required for homooligomerization; it reads GEEFYMLTRRVLQLETVLEGVVSQIDAVGSKLKMLERKGWLAPSPGVKEQAIWKHPQPAP. The tract at residues 759–805 is disordered; it reads PQPAPAVTPDPWGVQGGQESEVPYKREEEALEERRLSRGEIPTLQRS. The span at 780-796 shows a compositional bias: basic and acidic residues; the sequence is VPYKREEEALEERRLSR.

It belongs to the polycystin family. Oligomer. Functional PKD2L1 homotetramer can be formed either through C-terminal trimerization followed by N-terminal dimerization of a fourth subunit with a subunit in the trimer or through dimerization followed by trimerization. Heterotetramer with either PKD1L1, PKD1L3 or PKD1; the heterotetrameric complex contains three PKD1L2 chains plus one chain from another family member. Interacts with PKD1L1, forming a ciliary calcium channel. Interacts with PKD1L3, forming a cation channel that is activated by low extracellular pH. Interacts with PKD1; this heteromeric functional cation channels is opened by hypo-osmotic stimulation. Interacts with RACK1; inhibits the channel activity possibly by impairing localization to the cell membrane. Post-translationally, palmitoylation is important for expression at the cell membrane and for channel activity. As to expression, detected in taste bud cells in fungiform papillae (at protein level). Ubiquitous. Expressed in adult heart, skeletal muscle, brain, spleen, testis, retina and liver. Isoform 4 appears to be expressed only in transformed lymphoblasts.

It is found in the cell projection. It localises to the cilium membrane. The protein localises to the cell membrane. Its subcellular location is the cytoplasmic vesicle. It carries out the reaction Ca(2+)(in) = Ca(2+)(out). The catalysed reaction is Na(+)(in) = Na(+)(out). The enzyme catalyses K(+)(in) = K(+)(out). It catalyses the reaction Mg(2+)(in) = Mg(2+)(out). With respect to regulation, the non-selective cation channel is gated following an off-response property by acid: gated open after the removal of acid stimulus, but not during acid application. Channel activity is inhibited by phosphatidylinositol-4,5-bisphosphate (PIP2). Non-selective cation channel activity is substantially increased when either the extracellular or intracellular calcium-ion concentration is raised. Regulation of non-selective cation channel activity by external calcium is bimodal, first sensitizing and subsequently inactivating the current. In terms of biological role, homotetrameric, non-selective cation channel that is permeable to sodium, potassium, magnesium and calcium. Also forms functionnal heteromeric channels with PKD1, PKD1L1 and PKD1L3. Pore-forming subunit of a heterotetrameric, non-selective cation channel, formed by PKD1L2 and PKD1L3, that is permeable to sodium, potassium, magnesium and calcium and which may act as a sour taste receptor in gustatory cells; however, its contribution to sour taste perception is unclear in vivo and may be indirect. The homomeric and heteromeric channels formed by PKD1L2 and PKD1L3 are activated by low pH and Ca(2+), but opens only when the extracellular pH rises again and after the removal of acid stimulus. Pore-forming subunit of a calcium-permeant ion channel formed by PKD1L2 and PKD1L1 in primary cilia, where it controls cilium calcium concentration, without affecting cytoplasmic calcium concentration, and regulates sonic hedgehog/SHH signaling and GLI2 transcription. The PKD1L1:PKD2L1 complex channel is mechanosensitive only at high pressures and is highly temperature sensitive. Pore-forming subunit of a calcium-permeant ion channel formed by PKD1L2 and PKD1 that produces a transient increase in intracellular calcium concentration upon hypo-osmotic stimulation (200 mOsm). May play a role in the perception of carbonation taste. May play a role in the sensory perception of water, via a mechanism that activates the channel in response to dilution of salivary bicarbonate and changes in salivary pH. The protein is Polycystin-2-like protein 1 of Homo sapiens (Human).